A 299-amino-acid chain; its full sequence is Recombination-associated protein RdgC (299 aa).

Belongs to the RdgC family.

The protein localises to the cytoplasm. It is found in the nucleoid. In terms of biological role, may be involved in recombination. The protein is Recombination-associated protein RdgC of Neisseria meningitidis serogroup C (strain 053442).